The primary structure comprises 359 residues: Carbamoyl phosphate synthase arginine-specific small chain (359 aa).

Residues 1–168 (MKAYLVLATG…VETFEGNGPH (168 aa)) form a CPSase region. L-glutamine-binding residues include Ser-45, Gly-216, and Gly-218. In terms of domain architecture, Glutamine amidotransferase type-1 spans 168-355 (HIVLIDYGFK…IDDVAAKGRE (188 aa)). Cys-243 acts as the Nucleophile in catalysis. L-glutamine is bound by residues Leu-244, Gln-247, Asn-285, and Tyr-288. Residues His-328 and Glu-330 contribute to the active site.

Belongs to the CarA family. In terms of assembly, composed of two chains; the small (or glutamine) chain promotes the hydrolysis of glutamine to ammonia, which is used by the large (or ammonia) chain to synthesize carbamoyl phosphate. Tetramer of heterodimers (alpha,beta)4.

It carries out the reaction hydrogencarbonate + L-glutamine + 2 ATP + H2O = carbamoyl phosphate + L-glutamate + 2 ADP + phosphate + 2 H(+). The catalysed reaction is L-glutamine + H2O = L-glutamate + NH4(+). It participates in amino-acid biosynthesis; L-arginine biosynthesis; carbamoyl phosphate from bicarbonate: step 1/1. In terms of biological role, small subunit of the glutamine-dependent carbamoyl phosphate synthetase (CPSase). CPSase catalyzes the formation of carbamoyl phosphate from the ammonia moiety of glutamine, carbonate, and phosphate donated by ATP, constituting the first step of the biosynthetic pathway leading to arginine and/or urea. The small subunit (glutamine amidotransferase) binds and cleaves glutamine to supply the large subunit with the substrate ammonia. The sequence is that of Carbamoyl phosphate synthase arginine-specific small chain from Halalkalibacterium halodurans (strain ATCC BAA-125 / DSM 18197 / FERM 7344 / JCM 9153 / C-125) (Bacillus halodurans).